A 132-amino-acid polypeptide reads, in one-letter code: Cell division protein FtsL (132 aa).

Topologically, residues 1–50 (MAELKKMRHNHYDVPVMDEPVIASQIKKTNQKKESFQLPQKKLNKISVFE) are cytoplasmic. The helical transmembrane segment at 51-71 (KILCILLLCSIVGIVVITIQI) threads the bilayer. Residues 72–132 (RTTISETMNN…EIDGNLRKVK (61 aa)) lie on the Extracellular side of the membrane.

Belongs to the FtsL family.

The protein resides in the cell membrane. Essential cell division protein. This is Cell division protein FtsL from Melissococcus plutonius (strain ATCC 35311 / DSM 29964 / CIP 104052 / LMG 20360 / NCIMB 702443).